The following is a 120-amino-acid chain: Large ribosomal subunit protein uL22 (120 aa).

This sequence belongs to the universal ribosomal protein uL22 family. As to quaternary structure, part of the 50S ribosomal subunit.

This protein binds specifically to 23S rRNA; its binding is stimulated by other ribosomal proteins, e.g. L4, L17, and L20. It is important during the early stages of 50S assembly. It makes multiple contacts with different domains of the 23S rRNA in the assembled 50S subunit and ribosome. Its function is as follows. The globular domain of the protein is located near the polypeptide exit tunnel on the outside of the subunit, while an extended beta-hairpin is found that lines the wall of the exit tunnel in the center of the 70S ribosome. This Corynebacterium efficiens (strain DSM 44549 / YS-314 / AJ 12310 / JCM 11189 / NBRC 100395) protein is Large ribosomal subunit protein uL22.